Consider the following 206-residue polypeptide: MNLTPAQERVYGFVRDYIQKNGYSPSYEEIRQNLGFRSLNAVFKHLKQLEQRGYVQSLWKNKKRALELLPLHTGAVSIPFLGVVAAGTPIEAVEIPESVEVPESFLANGNNFALRVKGDSMIEEGIREGDILIVARQSRAENGQTVVALVQGEATVKKFYQRGEEIELRPANSRMQPIHARADAVEVVGTVVGLLRNYRRRSLGVV.

Positions 27 to 47 (YEEIRQNLGFRSLNAVFKHLK) form a DNA-binding region, H-T-H motif. Catalysis depends on for autocatalytic cleavage activity residues serine 120 and lysine 157.

The protein belongs to the peptidase S24 family. Homodimer.

The enzyme catalyses Hydrolysis of Ala-|-Gly bond in repressor LexA.. Represses a number of genes involved in the response to DNA damage (SOS response), including recA and lexA. In the presence of single-stranded DNA, RecA interacts with LexA causing an autocatalytic cleavage which disrupts the DNA-binding part of LexA, leading to derepression of the SOS regulon and eventually DNA repair. The sequence is that of LexA repressor from Syntrophobacter fumaroxidans (strain DSM 10017 / MPOB).